Here is a 261-residue protein sequence, read N- to C-terminus: F-actin-capping protein subunit alpha (261 aa).

This sequence belongs to the F-actin-capping protein alpha subunit family. As to quaternary structure, heterodimer of an alpha and a beta subunit.

Functionally, F-actin-capping proteins bind in a Ca(2+)-independent manner to the fast growing ends of actin filaments (barbed end) thereby blocking the exchange of subunits at these ends. Unlike other capping proteins (such as gelsolin and severin), these proteins do not sever actin filaments. The polypeptide is F-actin-capping protein subunit alpha (CAP1) (Eremothecium gossypii (strain ATCC 10895 / CBS 109.51 / FGSC 9923 / NRRL Y-1056) (Yeast)).